We begin with the raw amino-acid sequence, 300 residues long: Ornithine carbamoyltransferase (300 aa).

Residues 49–52, Q76, R100, and 127–130 contribute to the carbamoyl phosphate site; these read STRT and HPCQ. Residues N158, D218, and 222–223 contribute to the L-ornithine site; that span reads SM. Carbamoyl phosphate-binding positions include 258-259 and R286; that span reads CL.

The protein belongs to the aspartate/ornithine carbamoyltransferase superfamily. OTCase family.

The protein localises to the cytoplasm. It catalyses the reaction carbamoyl phosphate + L-ornithine = L-citrulline + phosphate + H(+). Its pathway is amino-acid biosynthesis; L-arginine biosynthesis; L-arginine from L-ornithine and carbamoyl phosphate: step 1/3. Functionally, reversibly catalyzes the transfer of the carbamoyl group from carbamoyl phosphate (CP) to the N(epsilon) atom of ornithine (ORN) to produce L-citrulline. The chain is Ornithine carbamoyltransferase from Nitratidesulfovibrio vulgaris (strain ATCC 29579 / DSM 644 / CCUG 34227 / NCIMB 8303 / VKM B-1760 / Hildenborough) (Desulfovibrio vulgaris).